Reading from the N-terminus, the 97-residue chain is High mobility group protein homolog NHP1 (97 aa).

A disordered region spans residues 1–24; sequence MAGASDRTGVRRPRKAKKDPNAPK. The segment at residues 23–93 is a DNA-binding region (HMG box); the sequence is PKRALSSYMF…RYEREKAEYA (71 aa).

The protein resides in the nucleus. This Babesia bovis protein is High mobility group protein homolog NHP1.